A 337-amino-acid polypeptide reads, in one-letter code: Heme A synthase (337 aa).

A run of 5 helical transmembrane segments spans residues I6–I26, F87–F107, L119–V139, L154–K174, and L192–V212. H256 is a binding site for heme. 3 consecutive transmembrane segments (helical) span residues L258–E278, I285–L305, and V308–I328. Heme is bound at residue H316.

Belongs to the COX15/CtaA family. Type 2 subfamily. In terms of assembly, interacts with CtaB. The cofactor is heme b.

Its subcellular location is the cell membrane. It carries out the reaction Fe(II)-heme o + 2 A + H2O = Fe(II)-heme a + 2 AH2. The protein operates within porphyrin-containing compound metabolism; heme A biosynthesis; heme A from heme O: step 1/1. Functionally, catalyzes the conversion of heme O to heme A by two successive hydroxylations of the methyl group at C8. The first hydroxylation forms heme I, the second hydroxylation results in an unstable dihydroxymethyl group, which spontaneously dehydrates, resulting in the formyl group of heme A. This Rickettsia massiliae (strain Mtu5) protein is Heme A synthase.